Consider the following 141-residue polypeptide: Large ribosomal subunit protein uL11 (141 aa).

The protein belongs to the universal ribosomal protein uL11 family. In terms of assembly, part of the ribosomal stalk of the 50S ribosomal subunit. Interacts with L10 and the large rRNA to form the base of the stalk. L10 forms an elongated spine to which L12 dimers bind in a sequential fashion forming a multimeric L10(L12)X complex. Post-translationally, one or more lysine residues are methylated.

Forms part of the ribosomal stalk which helps the ribosome interact with GTP-bound translation factors. In Wolinella succinogenes (strain ATCC 29543 / DSM 1740 / CCUG 13145 / JCM 31913 / LMG 7466 / NCTC 11488 / FDC 602W) (Vibrio succinogenes), this protein is Large ribosomal subunit protein uL11.